The sequence spans 98 residues: NADH-ubiquinone oxidoreductase chain 4L (98 aa).

Transmembrane regions (helical) follow at residues 1-21, 25-45, and 59-81; these read MSLVHINIFLAFTVSLVGLLM, HLMSSLLCLEGMMLSLFVMAT, and MPIILLVFAACERALGLSLLVMV.

It belongs to the complex I subunit 4L family. As to quaternary structure, core subunit of respiratory chain NADH dehydrogenase (Complex I) which is composed of 45 different subunits.

The protein resides in the mitochondrion inner membrane. It carries out the reaction a ubiquinone + NADH + 5 H(+)(in) = a ubiquinol + NAD(+) + 4 H(+)(out). Functionally, core subunit of the mitochondrial membrane respiratory chain NADH dehydrogenase (Complex I) which catalyzes electron transfer from NADH through the respiratory chain, using ubiquinone as an electron acceptor. Part of the enzyme membrane arm which is embedded in the lipid bilayer and involved in proton translocation. The polypeptide is NADH-ubiquinone oxidoreductase chain 4L (MT-ND4L) (Equus caballus (Horse)).